The sequence spans 127 residues: Holo-[acyl-carrier-protein] synthase (127 aa).

The Mg(2+) site is built by aspartate 7 and glutamate 53.

The protein belongs to the P-Pant transferase superfamily. AcpS family. Mg(2+) is required as a cofactor.

The protein localises to the cytoplasm. It catalyses the reaction apo-[ACP] + CoA = holo-[ACP] + adenosine 3',5'-bisphosphate + H(+). Transfers the 4'-phosphopantetheine moiety from coenzyme A to a Ser of acyl-carrier-protein. The polypeptide is Holo-[acyl-carrier-protein] synthase (Herpetosiphon aurantiacus (strain ATCC 23779 / DSM 785 / 114-95)).